Here is a 609-residue protein sequence, read N- to C-terminus: MSNEFNAQSFLRTVSSSAGVYRMYDVKNDVIYVGKAKDLKKRLTSYFRKNLANVKTQALVSHIHHINVTLTHSETDALLLENDYIKQYMPKYNVLLRDDKSYPYILLSQHEHPRLAYHRGPQREKGHYFGPYPNGGAVRESLHLMQKLFPIRQCDDLYYKSRSRPCLQYQLSRCSAPCVGKVSNADYDEQVKLASLFLKGKDQQVISALVDKMELAAERQAYEQAARFRDQIMALRKVAEQQEVSNNKGDMDVIGVHYSSGIACFHLLFIREGKIFGSRSYYPSVPAQTDMDEVLRSFILQFYLNADIQRTIPKEVVISHNFEELHELEAAVSEALDKKFSIKTNVRADRASFLRLAVTNATNAVVTRLSHKNTVEQRFVLLEEILELSTPIQRMECFDISHTMGESTVASCVVFNREGPHKGEYRRYNIEGITPGDDYAAMKQAVSRRFDKIEAGGKIPDILFIDGGLGQLRIAQKIVDEKFVHLDKAPQLIGVAKGEGRKPGLETLILGDTETSFSLEGDSPALHLIQHIRDESHRFAIAGHRNRRQKTRNTSTLESIPGIGPKRRKALLQHLGGLQEVKGASVAELVKVPGISIEMAQTIHDALRG.

The GIY-YIG domain maps to 16–94 (SSAGVYRMYD…IKQYMPKYNV (79 aa)). Residues 203–238 (QQVISALVDKMELAAERQAYEQAARFRDQIMALRKV) enclose the UVR domain.

Belongs to the UvrC family. In terms of assembly, interacts with UvrB in an incision complex.

It localises to the cytoplasm. Functionally, the UvrABC repair system catalyzes the recognition and processing of DNA lesions. UvrC both incises the 5' and 3' sides of the lesion. The N-terminal half is responsible for the 3' incision and the C-terminal half is responsible for the 5' incision. The protein is UvrABC system protein C of Shewanella baltica (strain OS155 / ATCC BAA-1091).